A 51-amino-acid chain; its full sequence is Large ribosomal subunit protein eL39 (51 aa).

The protein belongs to the eukaryotic ribosomal protein eL39 family.

This Hyperthermus butylicus (strain DSM 5456 / JCM 9403 / PLM1-5) protein is Large ribosomal subunit protein eL39.